We begin with the raw amino-acid sequence, 173 residues long: Shikimate kinase 1 (173 aa).

Residue 14–19 (GAGKST) participates in ATP binding. Serine 18 is a Mg(2+) binding site. Residues aspartate 36, arginine 60, and glycine 82 each coordinate substrate. Arginine 120 contributes to the ATP binding site. Arginine 140 contributes to the substrate binding site. Glutamine 157 provides a ligand contact to ATP.

This sequence belongs to the shikimate kinase family. Monomer. Mg(2+) serves as cofactor.

It is found in the cytoplasm. The catalysed reaction is shikimate + ATP = 3-phosphoshikimate + ADP + H(+). It functions in the pathway metabolic intermediate biosynthesis; chorismate biosynthesis; chorismate from D-erythrose 4-phosphate and phosphoenolpyruvate: step 5/7. Catalyzes the specific phosphorylation of the 3-hydroxyl group of shikimic acid using ATP as a cosubstrate. In Escherichia fergusonii (strain ATCC 35469 / DSM 13698 / CCUG 18766 / IAM 14443 / JCM 21226 / LMG 7866 / NBRC 102419 / NCTC 12128 / CDC 0568-73), this protein is Shikimate kinase 1.